A 456-amino-acid chain; its full sequence is Bifunctional protein GlmU (456 aa).

Positions 1 to 231 (MERTCLAIIL…EEELTGCNTR (231 aa)) are pyrophosphorylase. UDP-N-acetyl-alpha-D-glucosamine is bound by residues 10–13 (LAAG), Lys-24, Gln-77, and 82–83 (GT). Asp-107 serves as a coordination point for Mg(2+). UDP-N-acetyl-alpha-D-glucosamine contacts are provided by Gly-143, Glu-157, Asn-172, and Asn-229. Mg(2+) is bound at residue Asn-229. The linker stretch occupies residues 232–252 (AELAYIERLWQQRRRHELMLA). Residues 253-456 (GVSMVAPETV…LARKIAKAAE (204 aa)) form an N-acetyltransferase region. UDP-N-acetyl-alpha-D-glucosamine is bound by residues Arg-318 and Lys-336. The active-site Proton acceptor is the His-348. UDP-N-acetyl-alpha-D-glucosamine is bound by residues Tyr-351 and Asn-362. Acetyl-CoA contacts are provided by residues Ala-365, 371 to 372 (NY), Ser-390, Ser-408, and Arg-425.

The protein in the N-terminal section; belongs to the N-acetylglucosamine-1-phosphate uridyltransferase family. In the C-terminal section; belongs to the transferase hexapeptide repeat family. As to quaternary structure, homotrimer. Mg(2+) serves as cofactor.

The protein localises to the cytoplasm. It carries out the reaction alpha-D-glucosamine 1-phosphate + acetyl-CoA = N-acetyl-alpha-D-glucosamine 1-phosphate + CoA + H(+). The enzyme catalyses N-acetyl-alpha-D-glucosamine 1-phosphate + UTP + H(+) = UDP-N-acetyl-alpha-D-glucosamine + diphosphate. It functions in the pathway nucleotide-sugar biosynthesis; UDP-N-acetyl-alpha-D-glucosamine biosynthesis; N-acetyl-alpha-D-glucosamine 1-phosphate from alpha-D-glucosamine 6-phosphate (route II): step 2/2. Its pathway is nucleotide-sugar biosynthesis; UDP-N-acetyl-alpha-D-glucosamine biosynthesis; UDP-N-acetyl-alpha-D-glucosamine from N-acetyl-alpha-D-glucosamine 1-phosphate: step 1/1. The protein operates within bacterial outer membrane biogenesis; LPS lipid A biosynthesis. In terms of biological role, catalyzes the last two sequential reactions in the de novo biosynthetic pathway for UDP-N-acetylglucosamine (UDP-GlcNAc). The C-terminal domain catalyzes the transfer of acetyl group from acetyl coenzyme A to glucosamine-1-phosphate (GlcN-1-P) to produce N-acetylglucosamine-1-phosphate (GlcNAc-1-P), which is converted into UDP-GlcNAc by the transfer of uridine 5-monophosphate (from uridine 5-triphosphate), a reaction catalyzed by the N-terminal domain. This is Bifunctional protein GlmU from Sinorhizobium medicae (strain WSM419) (Ensifer medicae).